Consider the following 353-residue polypeptide: tRNA-cytidine(32) 2-sulfurtransferase (353 aa).

Residues 49–54 (SGGKDS) carry the PP-loop motif motif. The [4Fe-4S] cluster site is built by Cys-124, Cys-127, and Cys-215.

It belongs to the TtcA family. In terms of assembly, homodimer. Requires Mg(2+) as cofactor. [4Fe-4S] cluster is required as a cofactor.

The protein localises to the cytoplasm. It catalyses the reaction cytidine(32) in tRNA + S-sulfanyl-L-cysteinyl-[cysteine desulfurase] + AH2 + ATP = 2-thiocytidine(32) in tRNA + L-cysteinyl-[cysteine desulfurase] + A + AMP + diphosphate + H(+). The protein operates within tRNA modification. Functionally, catalyzes the ATP-dependent 2-thiolation of cytidine in position 32 of tRNA, to form 2-thiocytidine (s(2)C32). The sulfur atoms are provided by the cysteine/cysteine desulfurase (IscS) system. The chain is tRNA-cytidine(32) 2-sulfurtransferase from Sodalis glossinidius (strain morsitans).